A 768-amino-acid chain; its full sequence is DNA ligase 1 (768 aa).

A disordered region spans residues 42–139 (VEVSQSSSDS…KEPPLESNAR (98 aa)). Basic and acidic residues predominate over residues 52 to 99 (KNVDGRSTSEKRKVESVKLVDESKHNNHDDTGTQNVERENNIVSEAKK). Low complexity predominate over residues 104–124 (GSSSSSSDAVSSNNDSGASTP). An interaction with target DNA region spans residues 309-318 (KLRLQLAEKT). Glu-414 is an ATP binding site. Lys-416 serves as the catalytic N6-AMP-lysine intermediate. ATP contacts are provided by Arg-421 and Arg-437. A Mg(2+)-binding site is contributed by Glu-469. An interaction with target DNA region spans residues 490-492 (KRK). Glu-568 is a Mg(2+) binding site. ATP is bound by residues Lys-573, Arg-587, and Lys-593.

This sequence belongs to the ATP-dependent DNA ligase family. Requires Mg(2+) as cofactor.

The protein localises to the nucleus. The catalysed reaction is ATP + (deoxyribonucleotide)n-3'-hydroxyl + 5'-phospho-(deoxyribonucleotide)m = (deoxyribonucleotide)n+m + AMP + diphosphate.. In terms of biological role, DNA ligase that seals nicks in double-stranded DNA during DNA replication, DNA recombination and DNA repair. The sequence is that of DNA ligase 1 (cdc17) from Schizosaccharomyces pombe (strain 972 / ATCC 24843) (Fission yeast).